A 435-amino-acid chain; its full sequence is Enolase (435 aa).

Gln-167 provides a ligand contact to (2R)-2-phosphoglycerate. Glu-209 functions as the Proton donor in the catalytic mechanism. Positions 246, 292, and 319 each coordinate Mg(2+). Residues Lys-344, Arg-373, Ser-374, and Lys-395 each contribute to the (2R)-2-phosphoglycerate site. The Proton acceptor role is filled by Lys-344.

This sequence belongs to the enolase family. Mg(2+) is required as a cofactor.

The protein localises to the cytoplasm. It is found in the secreted. The protein resides in the cell surface. It carries out the reaction (2R)-2-phosphoglycerate = phosphoenolpyruvate + H2O. It functions in the pathway carbohydrate degradation; glycolysis; pyruvate from D-glyceraldehyde 3-phosphate: step 4/5. In terms of biological role, catalyzes the reversible conversion of 2-phosphoglycerate (2-PG) into phosphoenolpyruvate (PEP). It is essential for the degradation of carbohydrates via glycolysis. This is Enolase from Lachnospira eligens (strain ATCC 27750 / DSM 3376 / VPI C15-48 / C15-B4) (Eubacterium eligens).